Consider the following 557-residue polypeptide: ETHYLENE INSENSITIVE 3-like 5 protein (557 aa).

Disordered regions lie at residues 1–23 (MVEV…DLEE) and 61–96 (NLNS…RKKM). Positions 64–82 (SVISSPSSSTSASSSSSSS) are enriched in low complexity. Positions 270–311 (ERVRRLARQSKCLQDKMMAKETDTWSRVLNQEEARLNRLKIS) form a coiled coil.

The protein belongs to the EIN3 family.

It is found in the nucleus. Functionally, putative transcription factor that may be involved in the ethylene response pathway. The sequence is that of ETHYLENE INSENSITIVE 3-like 5 protein (EIL5) from Arabidopsis thaliana (Mouse-ear cress).